The primary structure comprises 203 residues: Recombination protein RecR (203 aa).

The C4-type zinc finger occupies 57-72 (CQRCRTLAETPLCSIC). The Toprim domain maps to 80-175 (GLLCVVESPA…RLSRLAYGVP (96 aa)).

This sequence belongs to the RecR family.

Its function is as follows. May play a role in DNA repair. It seems to be involved in an RecBC-independent recombinational process of DNA repair. It may act with RecF and RecO. The sequence is that of Recombination protein RecR from Chromohalobacter salexigens (strain ATCC BAA-138 / DSM 3043 / CIP 106854 / NCIMB 13768 / 1H11).